Reading from the N-terminus, the 183-residue chain is Pyruvoyl-dependent arginine decarboxylase 2 (183 aa).

Position 41 is a pyruvic acid (Ser) (Ser-41).

It belongs to the PdaD family. Requires pyruvate as cofactor.

The enzyme catalyses L-arginine + H(+) = agmatine + CO2. This Methanosarcina acetivorans (strain ATCC 35395 / DSM 2834 / JCM 12185 / C2A) protein is Pyruvoyl-dependent arginine decarboxylase 2 (pdaD2).